Consider the following 175-residue polypeptide: 2-oxo-4-hydroxy-4-carboxy-5-ureidoimidazoline decarboxylase (175 aa).

Residue His-67 is the Proton donor of the active site. Substrate contacts are provided by residues Pro-68, 84–88 (SRGEQ), and 119–123 (FVICA). Residues 173–175 (TKL) carry the Microbody targeting signal motif.

This sequence belongs to the OHCU decarboxylase family. In terms of assembly, homodimer.

The protein resides in the peroxisome. It carries out the reaction 5-hydroxy-2-oxo-4-ureido-2,5-dihydro-1H-imidazole-5-carboxylate + H(+) = (S)-allantoin + CO2. Its pathway is purine metabolism; urate degradation; (S)-allantoin from urate: step 3/3. Its function is as follows. Catalyzes the stereoselective decarboxylation of 2-oxo-4-hydroxy-4-carboxy-5-ureidoimidazoline (OHCU) to (S)-allantoin. This chain is 2-oxo-4-hydroxy-4-carboxy-5-ureidoimidazoline decarboxylase (urad), found in Amia calva (Bowfin).